A 362-amino-acid chain; its full sequence is Apelin receptor A (362 aa).

Residues 1-34 (MEPTSEYTETYDYYDTGYNDSGCDYSEWEPSYSL) lie on the Extracellular side of the membrane. N-linked (GlcNAc...) asparagine glycosylation is present at Asn19. Cystine bridges form between Cys23/Cys286 and Cys105/Cys184. Residues 35 to 55 (IPVLYMLIFILGLSGNGVVIF) form a helical membrane-spanning segment. The Cytoplasmic segment spans residues 56-73 (TVWRAKSKRRAADVYIGN). A helical membrane pass occupies residues 74–94 (LALADLTFVITLPLWAVYTAL). The Extracellular segment spans residues 95-106 (GYHWPFGVALCK). A helical transmembrane segment spans residues 107–127 (ISSYVVLVNMYASVFCLTCLS). Over 128-149 (FDRYLAIVHSLSSGRLRSRATM) the chain is Cytoplasmic. The helical transmembrane segment at 150 to 170 (LASLGAIWFLSCLLAVPTLLF) threads the bilayer. The Extracellular portion of the chain corresponds to 171–211 (RTTVDDTGSNRTTCAMDFSLVTLNQDHESLWIAGLSLSSSA). A glycan (N-linked (GlcNAc...) asparagine) is linked at Asn180. Residues 212–232 (LGFLLPFLAMTVCYCFIGCTV) form a helical membrane-spanning segment. Residues 233-248 (TRHFSHLRKEDQKKRR) are Cytoplasmic-facing. The helical transmembrane segment at 249-269 (LLKIITTLVVVFAFCWTPFHV) threads the bilayer. At 270–284 (LKSMDALSYLDLAPN) the chain is on the extracellular side. The helical transmembrane segment at 285-305 (SCGFLHFLLLAHPYATCLAYV) threads the bilayer. Topologically, residues 306 to 362 (NSCLNPFLYAFFDLRFRSQCLCLLNLKKAMHGHMSSMSSTLSAQTQKSEVQSLATKV) are cytoplasmic.

The protein belongs to the G-protein coupled receptor 1 family. In terms of tissue distribution, first expressed before epiboly in dorsal precursors. During epiboly, expressed in the enveloping layer, yolk syncytial layer and migrating mesendoderm. During segmentation stages, expressed in epithelial structures such as adaxial cells, border cells of the newly formed somites, developing lens, otic vesicles and venous vasculature.

The protein localises to the cell membrane. Its function is as follows. G protein-coupled receptor for peptide hormones apelin (apln) and apelin receptor early endogenous ligand (apela), that plays a role in the regulation of normal cardiovascular function and fluid homeostasis. When acting as apelin receptor, activates both G(i) protein pathway that inhibits adenylate cyclase activity, and the beta-arrestin pathway that promotes internalization of the receptor. Also functions as mechanoreceptor that is activated by pathological stimuli in a G-protein-independent fashion to induce beta-arrestin signaling, hence eliciting cardiac hypertrophy. However, the presence of apelin ligand blunts cardiac hypertrophic induction from APLNR/APJ on response to pathological stimuli. Plays a key role in early development such as gastrulation, blood vessels formation and heart morphogenesis by acting as a receptor for apela hormone, promoting endoderm and mesendoderm cell migration and regulating the migration of cells fated to become myocardial progenitors, respectively. Positively regulates angioblast migration toward the embryonic midline, i.e. the position of the future vessel formation, during vasculogenesis. May promote sinus venosus (SV)-derived endothelial cells migration into the developing heart to promote coronary blood vessel development. Required for cardiovascular development, particularly for intersomitic vein angiogenesis by acting as a receptor for apln hormone. Also plays a role in various processes in adults such as regulation of blood vessel formation, blood pressure, heart contractility, and heart failure. Acts redundantly with agtrl1b in heart development. The protein is Apelin receptor A (aplnra) of Danio rerio (Zebrafish).